The following is a 329-amino-acid chain: GTP 3',8-cyclase (329 aa).

The Radical SAM core domain maps to 8–234; it reads AFARKFFYLR…QIRQRSDGPA (227 aa). R17 lines the GTP pocket. Residues C24 and C28 each contribute to the [4Fe-4S] cluster site. Residue Y30 participates in S-adenosyl-L-methionine binding. C31 is a binding site for [4Fe-4S] cluster. Position 68 (R68) interacts with GTP. G72 contributes to the S-adenosyl-L-methionine binding site. T99 serves as a coordination point for GTP. S123 is an S-adenosyl-L-methionine binding site. GTP is bound at residue K160. M194 is an S-adenosyl-L-methionine binding site. Positions 257 and 260 each coordinate [4Fe-4S] cluster. 262–264 contributes to the GTP binding site; sequence RLR. C274 is a binding site for [4Fe-4S] cluster.

Belongs to the radical SAM superfamily. MoaA family. In terms of assembly, monomer and homodimer. [4Fe-4S] cluster is required as a cofactor.

The enzyme catalyses GTP + AH2 + S-adenosyl-L-methionine = (8S)-3',8-cyclo-7,8-dihydroguanosine 5'-triphosphate + 5'-deoxyadenosine + L-methionine + A + H(+). Its pathway is cofactor biosynthesis; molybdopterin biosynthesis. Functionally, catalyzes the cyclization of GTP to (8S)-3',8-cyclo-7,8-dihydroguanosine 5'-triphosphate. This is GTP 3',8-cyclase from Klebsiella pneumoniae (strain 342).